A 246-amino-acid polypeptide reads, in one-letter code: 3-oxoacyl-[acyl-carrier-protein] reductase FabG (246 aa).

NADP(+) contacts are provided by residues 11–14 (GASR), 62–63 (NV), and N89. S141 provides a ligand contact to substrate. Y154 (proton acceptor) is an active-site residue. Residues 154 to 158 (YVATK) and I187 each bind NADP(+).

This sequence belongs to the short-chain dehydrogenases/reductases (SDR) family. As to quaternary structure, homotetramer.

It carries out the reaction a (3R)-hydroxyacyl-[ACP] + NADP(+) = a 3-oxoacyl-[ACP] + NADPH + H(+). The protein operates within lipid metabolism; fatty acid biosynthesis. In terms of biological role, catalyzes the NADPH-dependent reduction of beta-ketoacyl-ACP substrates to beta-hydroxyacyl-ACP products, the first reductive step in the elongation cycle of fatty acid biosynthesis. The polypeptide is 3-oxoacyl-[acyl-carrier-protein] reductase FabG (fabG) (Staphylococcus aureus (strain Mu50 / ATCC 700699)).